The chain runs to 367 residues: Phosphoribosylaminoimidazole-succinocarboxamide synthase (367 aa).

Belongs to the SAICAR synthetase family.

It carries out the reaction 5-amino-1-(5-phospho-D-ribosyl)imidazole-4-carboxylate + L-aspartate + ATP = (2S)-2-[5-amino-1-(5-phospho-beta-D-ribosyl)imidazole-4-carboxamido]succinate + ADP + phosphate + 2 H(+). It participates in purine metabolism; IMP biosynthesis via de novo pathway; 5-amino-1-(5-phospho-D-ribosyl)imidazole-4-carboxamide from 5-amino-1-(5-phospho-D-ribosyl)imidazole-4-carboxylate: step 1/2. In Vibrio atlanticus (strain LGP32) (Vibrio splendidus (strain Mel32)), this protein is Phosphoribosylaminoimidazole-succinocarboxamide synthase.